The primary structure comprises 1347 residues: DExH-box ATP-dependent RNA helicase DExH11 (1347 aa).

The interval 263–291 (ELEGDDHTAGSESPKAEAEPDAKASISNE) is disordered. Residues 267 to 284 (DDHTAGSESPKAEAEPDA) show a composition bias toward basic and acidic residues. Residues 369 to 524 (ICCLEKGESV…WIGRTKQKEI (156 aa)) form the Helicase ATP-binding domain. Residue 382-389 (AHTSAGKT) coordinates ATP. The DEVH box motif lies at 472–475 (DEVH). A disordered region spans residues 566-625 (SQKKKNSNAVSVAPKQQMGSSAHQDGSKSQKHEAHSRGKQNKHSSVKDVGKSSYSGNSQN). The segment covering 590–601 (DGSKSQKHEAHS) has biased composition (basic and acidic residues). A Helicase C-terminal domain is found at 673–838 (DLTSSSEKSE…LTYIMILHLL (166 aa)).

Belongs to the DExH box helicase family. SKI2 subfamily. In terms of assembly, component of the cytoplasmic SKI complex, which consists of SKI2, SKI3 and VIP3/SKI8. In terms of tissue distribution, expressed in vascular tissues of leaves and roots of young plants.

The protein resides in the cytoplasm. It catalyses the reaction ATP + H2O = ADP + phosphate + H(+). In terms of biological role, component of the SKI complex which is thought to be involved in exosome-mediated RNA decay and associates with transcriptionally active genes in a manner dependent on PAF1 complex (PAF1C). Involved in the regulation of potassium deprivation stress response. The sequence is that of DExH-box ATP-dependent RNA helicase DExH11 from Arabidopsis thaliana (Mouse-ear cress).